Here is a 275-residue protein sequence, read N- to C-terminus: D-apionate oxidoisomerase (275 aa).

Residues 11-13 (GKM), Glu-32, and Asp-68 contribute to the NAD(+) site. Zn(2+)-binding residues include His-113 and Glu-183.

The protein belongs to the ApnO family. The cofactor is Zn(2+).

It carries out the reaction D-apionate + NAD(+) = 3-oxoisoapionate + NADH + H(+). Its pathway is carbohydrate metabolism. In terms of biological role, involved in catabolism of D-apiose. Catalyzes the conversion of D-apionate to 3-oxo-isoapionate. The chain is D-apionate oxidoisomerase from Rhizobium rhizogenes (strain K84 / ATCC BAA-868) (Agrobacterium radiobacter).